The chain runs to 139 residues: Actin-depolymerizing factor 6 (139 aa).

Positions 5-139 (ASGMAVGDEC…SMDIVKARAL (135 aa)) constitute an ADF-H domain.

This sequence belongs to the actin-binding proteins ADF family.

Its function is as follows. Actin-depolymerizing protein. Severs actin filaments (F-actin) and binds to actin monomers. The sequence is that of Actin-depolymerizing factor 6 (ADF6) from Oryza sativa subsp. japonica (Rice).